Consider the following 363-residue polypeptide: N-acetylmuramate/N-acetylglucosamine kinase (363 aa).

This sequence belongs to the kinase AmgK family.

The enzyme catalyses N-acetyl-D-muramate + ATP = N-acetyl-alpha-D-muramate 1-phosphate + ADP + H(+). It catalyses the reaction N-acetyl-D-glucosamine + ATP = N-acetyl-alpha-D-glucosamine 1-phosphate + ADP + H(+). Its pathway is cell wall biogenesis; peptidoglycan recycling. Its function is as follows. Sugar kinase that catalyzes the ATP-dependent phosphorylation of N-acetylmuramate (MurNAc) and N-acetylglucosamine (GlcNAc) at its C1 hydroxyl group, leading to MurNAc alpha-1P and GlcNAc alpha-1P, respectively. Is likely involved in peptidoglycan recycling as part of a cell wall recycling pathway that bypasses de novo biosynthesis of the peptidoglycan precursor UDP-MurNAc. Is able to complement the fosfomycin sensitivity phenotype of a P.putida mutant lacking amgK. This chain is N-acetylmuramate/N-acetylglucosamine kinase, found in Caulobacter vibrioides (strain ATCC 19089 / CIP 103742 / CB 15) (Caulobacter crescentus).